The chain runs to 94 residues: Large ribosomal subunit protein bL25 (94 aa).

It belongs to the bacterial ribosomal protein bL25 family. In terms of assembly, part of the 50S ribosomal subunit; part of the 5S rRNA/L5/L18/L25 subcomplex. Contacts the 5S rRNA. Binds to the 5S rRNA independently of L5 and L18.

Functionally, this is one of the proteins that binds to the 5S RNA in the ribosome where it forms part of the central protuberance. This Shigella boydii serotype 18 (strain CDC 3083-94 / BS512) protein is Large ribosomal subunit protein bL25.